The sequence spans 236 residues: Methylosome subunit pICln (236 aa).

The tract at residues 1–20 (MSFLKSFPPPGPTEGLRHQQ) is disordered. S2 carries the post-translational modification N-acetylserine. S101, S143, S192, S194, S197, and S209 each carry phosphoserine. Phosphothreonine is present on T222.

This sequence belongs to the pICln (TC 1.A.47) family. As to quaternary structure, component of the methylosome, a 20S complex containing at least PRMT5/SKB1, WDR77/MEP50 and CLNS1A/pICln. May mediate SNRPD1 and SNRPD3 methylation. Forms a 6S pICln-Sm complex composed of CLNS1A/pICln, SNRPD1, SNRPD2, SNRPE, SNRPF and SNRPG; ring-like structure where CLNS1A/pICln mimics additional Sm proteins and which is unable to assemble into the core snRNP. Interacts with LSM10 and LSM11. In terms of tissue distribution, widely distributed but expressed more abundantly in nonpigmented ciliary epithelial cells than in pigmented ones.

The protein localises to the cytoplasm. The protein resides in the cytosol. It is found in the nucleus. It localises to the cytoskeleton. Involved in both the assembly of spliceosomal snRNPs and the methylation of Sm proteins. Chaperone that regulates the assembly of spliceosomal U1, U2, U4 and U5 small nuclear ribonucleoproteins (snRNPs), the building blocks of the spliceosome, and thereby plays an important role in the splicing of cellular pre-mRNAs. Most spliceosomal snRNPs contain a common set of Sm proteins SNRPB, SNRPD1, SNRPD2, SNRPD3, SNRPE, SNRPF and SNRPG that assemble in a heptameric protein ring on the Sm site of the small nuclear RNA to form the core snRNP (Sm core). In the cytosol, the Sm proteins SNRPD1, SNRPD2, SNRPE, SNRPF and SNRPG are trapped in an inactive 6S pICln-Sm complex by the chaperone CLNS1A that controls the assembly of the core snRNP. Dissociation by the SMN complex of CLNS1A from the trapped Sm proteins and their transfer to an SMN-Sm complex triggers the assembly of core snRNPs and their transport to the nucleus. The sequence is that of Methylosome subunit pICln (CLNS1A) from Oryctolagus cuniculus (Rabbit).